A 140-amino-acid chain; its full sequence is MRHGKAGRKLNRTASHRKAMFANMAASLITHEQIVTTLPKAKEIRPIVEKLVTLGKRGDLHARRQAISQIRDAVVVAKLFDAIATRYATRNGGYLRIMKAGFRQGDNAALAVVEFVDRDTSAKGAADKARVAAEEEAAAA.

The protein belongs to the bacterial ribosomal protein bL17 family. Part of the 50S ribosomal subunit. Contacts protein L32.

The sequence is that of Large ribosomal subunit protein bL17 from Rhizobium rhizogenes (strain K84 / ATCC BAA-868) (Agrobacterium radiobacter).